Consider the following 1242-residue polypeptide: Receptor-type adenylate cyclase GRESAG 4.1 (1242 aa).

Residues 1 to 39 (MHWQEGGGRGCVYTHGNCRRNLTARALQALQHVEALTCH) are Cytoplasmic-facing. The chain crosses the membrane as a helical span at residues 40–60 (YCVSLLHLLPLLLMWMPPVCA). The Extracellular segment spans residues 61-862 (DDSAVTVNVL…THTVTDSWNN (802 aa)). N-linked (GlcNAc...) asparagine glycosylation is found at asparagine 116, asparagine 289, asparagine 318, asparagine 338, asparagine 401, asparagine 534, asparagine 563, asparagine 603, asparagine 702, asparagine 741, and asparagine 818. Residues 863–883 (FWVCIRLVIIYCPWCVPTHLP) form a helical membrane-spanning segment. Over 884 to 1242 (AERRNNNRAP…PFYDMHLQEY (359 aa)) the chain is Cytoplasmic. In terms of domain architecture, Guanylate cyclase spans 901 to 1056 (TLIFTDIESS…RTPNMAARTE (156 aa)). Residues aspartate 906 and aspartate 949 each coordinate Mg(2+).

Belongs to the adenylyl cyclase class-3 family. Mg(2+) is required as a cofactor.

It localises to the membrane. It catalyses the reaction ATP = 3',5'-cyclic AMP + diphosphate. Its function is as follows. Could act as a receptor for an unknown ligand. The chain is Receptor-type adenylate cyclase GRESAG 4.1 (GRESAG 4.1) from Trypanosoma brucei brucei.